We begin with the raw amino-acid sequence, 107 residues long: Immunoglobulin kappa constant (107 aa).

One can recognise an Ig-like domain in the interval 6-103 (PTVSIFPPSS…STSPIVKSFN (98 aa)). A disulfide bridge links Cys-27 with Cys-87.

The sequence is that of Immunoglobulin kappa constant from Mus musculus (Mouse).